A 236-amino-acid polypeptide reads, in one-letter code: Phosphoribosylaminoimidazole-succinocarboxamide synthase (236 aa).

The protein belongs to the SAICAR synthetase family.

It carries out the reaction 5-amino-1-(5-phospho-D-ribosyl)imidazole-4-carboxylate + L-aspartate + ATP = (2S)-2-[5-amino-1-(5-phospho-beta-D-ribosyl)imidazole-4-carboxamido]succinate + ADP + phosphate + 2 H(+). It functions in the pathway purine metabolism; IMP biosynthesis via de novo pathway; 5-amino-1-(5-phospho-D-ribosyl)imidazole-4-carboxamide from 5-amino-1-(5-phospho-D-ribosyl)imidazole-4-carboxylate: step 1/2. This Coprothermobacter proteolyticus (strain ATCC 35245 / DSM 5265 / OCM 4 / BT) protein is Phosphoribosylaminoimidazole-succinocarboxamide synthase.